Consider the following 250-residue polypeptide: Small ribosomal subunit protein uS3 (250 aa).

A KH type-2 domain is found at 39 to 107 (VREFLTKKLK…PAQVSINEID (69 aa)). The disordered stretch occupies residues 215–250 (MNPAPAEERPAKRGRGRGEGQERRGRRGDRAADKGE). Basic and acidic residues predominate over residues 220 to 250 (AEERPAKRGRGRGEGQERRGRRGDRAADKGE).

Belongs to the universal ribosomal protein uS3 family. In terms of assembly, part of the 30S ribosomal subunit. Forms a tight complex with proteins S10 and S14.

In terms of biological role, binds the lower part of the 30S subunit head. Binds mRNA in the 70S ribosome, positioning it for translation. In Acinetobacter baumannii (strain SDF), this protein is Small ribosomal subunit protein uS3.